The sequence spans 710 residues: Dynein axonemal assembly factor 3 homolog (710 aa).

A disordered region spans residues G403–T487. Residues A404–A416 show a composition bias toward gly residues. The span at A417–E438 shows a compositional bias: low complexity. Residues S453 to T462 show a composition bias toward gly residues. The span at D478–T487 shows a compositional bias: low complexity.

This sequence belongs to the DNAAF3 family.

It localises to the cytoplasm. Required for the assembly of axonemal inner and outer dynein arms. Involved in preassembly of dyneins into complexes before their transport into cilia. The chain is Dynein axonemal assembly factor 3 homolog (DAB1) from Chlamydomonas reinhardtii (Chlamydomonas smithii).